The primary structure comprises 388 residues: Trans-enoyl reductase tenC (388 aa).

NADP(+) is bound at residue 51 to 54 (VDGK). 142 to 149 (VGIASVGM) lines the substrate pocket. NADP(+) contacts are provided by residues 219-222 (SSES), Y237, and 284-285 (LD). Residue 304-308 (SFTQF) participates in substrate binding. Residue 373–374 (IK) participates in NADP(+) binding.

This sequence belongs to the zinc-containing alcohol dehydrogenase family. In terms of assembly, monomer.

It participates in secondary metabolite biosynthesis. Trans-enoyl reductase; part of the gene cluster that mediates the biosynthesis of tenellin-type 2-pyridones, iron-chelating compounds involved in iron stress tolerance, competition with the natural competitor fungus Metarhizium robertsii and insect hosts infection. TenC collaborates with the hybrid PKS-NRPS synthetase tenS to catalyze the assembly of the polyketide-amino acid backbone, since tenS lacks a designated enoylreductase (ER) domain. Upon formation of the polyketide backbone on the thiotemplate of tenS, the triketide is transferred to the NRPS module and linked to tyrosine to produce the pyrrolidine-2-dione intermediates, including pretellinin A, 11-hydropretellenin A, 12-hydropretellenin A, 13-hydropretellenin A, 14-hydropretellenin A, 12-oxopretellenin A and prototellinin D. The pathway begins with the assembly of the polyketide-amino acid backbone by the hybrid PKS-NRPS tenS with the help of the enoyl reductase tenC. These enzymes catalyze the synthesis of the pyrrolidine-2-dione intermediates pretellinin A, 11-hydropretellenin A, 12-hydropretellenin A, 13-hydropretellenin A, 14-hydropretellenin A, 12-oxopretellenin A and prototellinin D. The cytochrome P450 monooxygenase tenA then catalyzes an oxidative ring expansion of pretenellin A and 14-hydropretellenin A to form the 2-pyridone core, leading to pretenellin B and pyridovericin, respectively. The cytochrome P450 monooxygenase tenB is then required for the selective N-hydroxylation of the 2-pyridone nitrogen of yield tellinin and 15-hydroxytellenin (15-HT), respectively. The UDP-glucosyltransferase GT1 and the methyltransferase MT1, located outside the tenS gene cluster, contribute to the stepwise glycosylation and methylation of 15-HT to obtain the glycoside pyridovericin-N-O-(4-O-methyl-beta-D-glucopyranoside) (PMGP). Additional related compounds such as 1-O-methyl-15-HT, (8Z)-1-O-methyl-15-HT, and O-methyltenellin A are also produced but the enzymes involved in their biosynthesis have still to be determined. In Beauveria bassiana (strain ARSEF 2860) (White muscardine disease fungus), this protein is Trans-enoyl reductase tenC.